A 265-amino-acid chain; its full sequence is Type II pantothenate kinase (265 aa).

ATP is bound at residue 6-13; it reads DAGGTLIK. Glutamate 70 (proton acceptor) is an active-site residue. Residues threonine 99, 121 to 125, tyrosine 137, and serine 225 each bind ATP; that span reads GGMIQ.

This sequence belongs to the type II pantothenate kinase family. In terms of assembly, homodimer.

It is found in the cytoplasm. The enzyme catalyses (R)-pantothenate + ATP = (R)-4'-phosphopantothenate + ADP + H(+). The protein operates within cofactor biosynthesis; coenzyme A biosynthesis; CoA from (R)-pantothenate: step 1/5. Catalyzes the phosphorylation of pantothenate (Pan), the first step in CoA biosynthesis. This Staphylococcus epidermidis (strain ATCC 12228 / FDA PCI 1200) protein is Type II pantothenate kinase.